The primary structure comprises 785 residues: Terminal nucleotidyltransferase 4A (785 aa).

The interval 56–184 (AAGRAAPAAG…QFHPGRRKRE (129 aa)) is disordered. A compositionally biased stretch (pro residues) spans 68–85 (GPAPAASSPPPAPGPAAL). Low complexity-rich tracts occupy residues 86 to 98 (PPAL…PAAD) and 106 to 145 (SPSL…AGSG). 2 residues coordinate Mg(2+): D290 and D292. G353, K378, S396, and Y397 together coordinate ATP. Positions 421-480 (NLGMLLVEFFELYGRNFNYLKTGIRIKEGGAYIAKEEIMKAMTSGYRPSMLCIEDPLLPG) constitute a PAP-associated domain. N481 and R485 together coordinate ATP. The span at 593 to 611 (PQLLSSGSSASSVSSLSGS) shows a compositional bias: low complexity. Disordered stretches follow at residues 593 to 625 (PQLL…TPSV) and 731 to 785 (KGSH…SLSR). Residues 757–774 (RGHHQYNRTGWRRKKHAH) show a composition bias toward basic residues.

It belongs to the DNA polymerase type-B-like family. In terms of assembly, component of a nuclear TRAMP-like complex, an ATP-dependent exosome regulatory complex consisting of a helicase (MTREX), an oligadenylate polymerase (TENT4B or TENT4A), and a substrate specific RNA-binding factor (ZCCHC7 or ZCCHC8). Several TRAMP-like complexes exist with specific compositions and are associated with nuclear, or nucleolar RNA exosomes. The cofactor is Mg(2+). Mn(2+) is required as a cofactor.

The protein resides in the cytoplasm. Its subcellular location is the nucleus. The protein localises to the nucleoplasm. The catalysed reaction is RNA(n) + ATP = RNA(n)-3'-adenine ribonucleotide + diphosphate. In terms of biological role, terminal nucleotidyltransferase that catalyzes preferentially the transfer of ATP and GTP on RNA 3' poly(A) tail creating a heterogeneous 3' poly(A) tail leading to mRNAs stabilization by protecting mRNAs from active deadenylation. Also functions as a catalytic subunit of a TRAMP-like complex which has a poly(A) RNA polymerase activity and is involved in a post-transcriptional quality control mechanism. Polyadenylation with short oligo(A) tails is required for the degradative activity of the exosome on several of its nuclear RNA substrates. Has no terminal uridylyltransferase activity, and does not play a role in replication-dependent histone mRNA degradation via uridylation. This is Terminal nucleotidyltransferase 4A from Mus musculus (Mouse).